The sequence spans 626 residues: Chaperone protein HtpG (626 aa).

Residues 1 to 339 (MSTNQETRGF…SNDLPLNVSR (339 aa)) are a; substrate-binding. The tract at residues 340–555 (EILQDNKVTA…NDQMTTQMAK (216 aa)) is b. Residues 556–626 (LFAAAGQPVP…FIKRINKLLG (71 aa)) form a c region.

It belongs to the heat shock protein 90 family. In terms of assembly, homodimer.

The protein localises to the cytoplasm. Molecular chaperone. Has ATPase activity. The sequence is that of Chaperone protein HtpG from Aggregatibacter actinomycetemcomitans (Actinobacillus actinomycetemcomitans).